The primary structure comprises 212 residues: uncharacterized protein (212 aa).

The tract at residues 42 to 101 (GITGPKATKSPSRRTTRSPSPSRRTTRSSPSRRTTRSSPSRRTTRSPSPSGRRKQGGPAV) is disordered. The span at 58-91 (RSPSPSRRTTRSSPSRRTTRSSPSRRTTRSPSPS) shows a compositional bias: low complexity.

It belongs to the IIV-6 378R family.

This is an uncharacterized protein from Invertebrate iridescent virus 3 (IIV-3).